The sequence spans 137 residues: Basic phospholipase A2 3 (137 aa).

A signal peptide spans leucine 1–alanine 11. Residues alanine 12–leucine 19 constitute a propeptide that is removed on maturation. Intrachain disulfides connect cysteine 30–cysteine 89, cysteine 44–cysteine 136, cysteine 46–cysteine 62, cysteine 61–cysteine 117, cysteine 68–cysteine 110, cysteine 78–cysteine 103, and cysteine 96–cysteine 108. Ca(2+) contacts are provided by tyrosine 45, glycine 47, and glycine 49. Residue histidine 65 is part of the active site. Position 66 (aspartate 66) interacts with Ca(2+). Aspartate 111 is an active-site residue.

It belongs to the phospholipase A2 family. Group I subfamily. D49 sub-subfamily. Monomer, or homotrimer. Was firstly described as a trimer, but has been reinterpreted with the possibility of being a monomer. Requires Ca(2+) as cofactor. As to expression, expressed by the venom gland.

It is found in the secreted. It catalyses the reaction a 1,2-diacyl-sn-glycero-3-phosphocholine + H2O = a 1-acyl-sn-glycero-3-phosphocholine + a fatty acid + H(+). In terms of biological role, snake venom phospholipase A2 (PLA2) that shows anticoagulant and neurotoxic activities. PLA2 catalyzes the calcium-dependent hydrolysis of the 2-acyl groups in 3-sn-phosphoglycerides. This Bungarus caeruleus (Indian krait) protein is Basic phospholipase A2 3.